The chain runs to 852 residues: Disks large homolog 2 (852 aa).

Residues Cys-5 and Cys-7 are each lipidated (S-palmitoyl cysteine). Ser-28 is subject to Phosphoserine. Tyr-58 is subject to Phosphotyrosine. Ser-65 bears the Phosphoserine mark. 2 consecutive PDZ domains span residues 98 to 184 (EITL…VRRR) and 193 to 279 (EIKL…VGKP). A phosphoserine mark is found at Ser-307, Ser-328, Ser-360, Ser-365, Ser-406, and Ser-414. Residues 421-501 (KVVLHKGSTG…QTVTIIAQYQ (81 aa)) enclose the PDZ 3 domain. Tyr-505 is subject to Phosphotyrosine. Residues Ser-528, Ser-530, and Ser-553 each carry the phosphoserine modification. The SH3 domain occupies 536-606 (KRSLYVRAMF…PSKRRVERKE (71 aa)). The 176-residue stretch at 662–837 (TRPVIILGPM…IYNQCKLVIE (176 aa)) folds into the Guanylate kinase-like domain. Phosphotyrosine is present on residues Tyr-732 and Tyr-737.

Belongs to the MAGUK family. As to quaternary structure, interacts through its PDZ domains with NETO1. Interacts with NOS1/nNOS through second PDZ domain. Interacts with KCNJ2/Kir2.1 (via C-terminus) through one of its PDZ domains. Interacts with KCNJ4. Interacts with FRMPD4 (via C-terminus). Interacts with LRFN1. Interacts with LRFN2 and LRFN4. Interacts with FASLG. Interacts with ADAM22. Interacts with DGKI (via PDZ-binding motif). Palmitoylation of isoform 1 and isoform 2 is not required for targeting to postsynaptic density. As to expression, detected in juxtaparanodal zones in the central nervous system and at nerve terminal plexuses of basket cells in the cerebellum (at protein level). Brain. High levels in cerebellar Purkinje cells. Expressed in pyramidal cells of the Ammons's horn and granular cells of the dentate gyrus in the hippocampus as well as cerebral cortex and striatum. High levels in dorsal horn of spinal cord.

Its subcellular location is the cell membrane. It is found in the postsynaptic density. The protein resides in the synapse. The protein localises to the cell projection. It localises to the axon. Its subcellular location is the membrane. It is found in the perikaryon. Its function is as follows. Required for perception of chronic pain through NMDA receptor signaling. Regulates surface expression of NMDA receptors in dorsal horn neurons of the spinal cord. Interacts with the cytoplasmic tail of NMDA receptor subunits as well as inward rectifying potassium channels. Involved in regulation of synaptic stability at cholinergic synapses. Part of the postsynaptic protein scaffold of excitatory synapses. The polypeptide is Disks large homolog 2 (Dlg2) (Rattus norvegicus (Rat)).